The following is a 468-amino-acid chain: 6-phosphogluconate dehydrogenase, decarboxylating (468 aa).

NADP(+) contacts are provided by residues 10–15 (GMAVMG), 33–35 (NRS), 74–76 (VKA), and asparagine 102. Substrate contacts are provided by residues asparagine 102 and 128–130 (SGG). Catalysis depends on lysine 183, which acts as the Proton acceptor. Position 186–187 (186–187 (HN)) interacts with substrate. The Proton donor role is filled by glutamate 190. Positions 191, 260, 287, 445, and 451 each coordinate substrate.

Belongs to the 6-phosphogluconate dehydrogenase family. In terms of assembly, homodimer.

The catalysed reaction is 6-phospho-D-gluconate + NADP(+) = D-ribulose 5-phosphate + CO2 + NADPH. It functions in the pathway carbohydrate degradation; pentose phosphate pathway; D-ribulose 5-phosphate from D-glucose 6-phosphate (oxidative stage): step 3/3. Functionally, catalyzes the oxidative decarboxylation of 6-phosphogluconate to ribulose 5-phosphate and CO(2), with concomitant reduction of NADP to NADPH. This is 6-phosphogluconate dehydrogenase, decarboxylating (gnd) from Salmonella typhimurium (strain LT2 / SGSC1412 / ATCC 700720).